A 683-amino-acid chain; its full sequence is Methionine--tRNA ligase (683 aa).

A 'HIGH' region motif is present at residues 14–24; that stretch reads PYANGSIHLGH. Zn(2+) contacts are provided by Cys-145, Cys-148, Cys-158, and Cys-161. The 'KMSKS' region signature appears at 331 to 335; that stretch reads KMSKS. Residue Lys-334 coordinates ATP. Residues 545–572 form a disordered region; the sequence is ASKEDLTASQTDTGAAAPAGNGELAKDP. A tRNA-binding domain is found at 581–683; it reads TFAAVDLRVA…SGAKPGQRIK (103 aa).

Belongs to the class-I aminoacyl-tRNA synthetase family. MetG type 1 subfamily. Homodimer. It depends on Zn(2+) as a cofactor.

The protein localises to the cytoplasm. It catalyses the reaction tRNA(Met) + L-methionine + ATP = L-methionyl-tRNA(Met) + AMP + diphosphate. In terms of biological role, is required not only for elongation of protein synthesis but also for the initiation of all mRNA translation through initiator tRNA(fMet) aminoacylation. The protein is Methionine--tRNA ligase of Pseudomonas fluorescens (strain Pf0-1).